An 858-amino-acid polypeptide reads, in one-letter code: Leucine--tRNA ligase (858 aa).

The 'HIGH' region signature appears at 42-52 (PYPSGRLHMGH). Residues 618–622 (KMSKS) carry the 'KMSKS' region motif. K621 is a binding site for ATP.

The protein belongs to the class-I aminoacyl-tRNA synthetase family.

It is found in the cytoplasm. The enzyme catalyses tRNA(Leu) + L-leucine + ATP = L-leucyl-tRNA(Leu) + AMP + diphosphate. The chain is Leucine--tRNA ligase from Aliivibrio fischeri (strain ATCC 700601 / ES114) (Vibrio fischeri).